We begin with the raw amino-acid sequence, 229 residues long: Uracil-DNA glycosylase (229 aa).

Aspartate 64 (proton acceptor) is an active-site residue.

This sequence belongs to the uracil-DNA glycosylase (UDG) superfamily. UNG family.

The protein localises to the cytoplasm. It carries out the reaction Hydrolyzes single-stranded DNA or mismatched double-stranded DNA and polynucleotides, releasing free uracil.. Its function is as follows. Excises uracil residues from the DNA which can arise as a result of misincorporation of dUMP residues by DNA polymerase or due to deamination of cytosine. This chain is Uracil-DNA glycosylase, found in Salmonella choleraesuis (strain SC-B67).